Reading from the N-terminus, the 348-residue chain is Dihydroorotase (348 aa).

Zn(2+)-binding residues include histidine 14 and histidine 16. Substrate-binding positions include 16–18 and asparagine 42; that span reads HLR. Zn(2+) contacts are provided by lysine 100, histidine 137, and histidine 175. Lysine 100 is subject to N6-carboxylysine. A substrate-binding site is contributed by histidine 137. Residue leucine 220 coordinates substrate. Aspartate 248 serves as a coordination point for Zn(2+). Residue aspartate 248 is part of the active site. Substrate is bound by residues histidine 252 and alanine 264.

This sequence belongs to the metallo-dependent hydrolases superfamily. DHOase family. Class II DHOase subfamily. Homodimer. Zn(2+) serves as cofactor.

It catalyses the reaction (S)-dihydroorotate + H2O = N-carbamoyl-L-aspartate + H(+). It functions in the pathway pyrimidine metabolism; UMP biosynthesis via de novo pathway; (S)-dihydroorotate from bicarbonate: step 3/3. Its function is as follows. Catalyzes the reversible cyclization of carbamoyl aspartate to dihydroorotate. The sequence is that of Dihydroorotase from Pseudomonas putida (strain ATCC 47054 / DSM 6125 / CFBP 8728 / NCIMB 11950 / KT2440).